Consider the following 200-residue polypeptide: NAD(P)H dehydrogenase (quinone) (200 aa).

Residues 4-191 enclose the Flavodoxin-like domain; it reads VLVLYYSSYG…DIARYQGKHV (188 aa). Residues 10-15 and 79-81 contribute to the FMN site; these read SSYGHV and TRF. Tyrosine 12 is an NAD(+) binding site. Tryptophan 99 provides a ligand contact to substrate. FMN-binding positions include 114–120 and histidine 135; that span reads STGTQHG.

This sequence belongs to the WrbA family. FMN is required as a cofactor.

It carries out the reaction a quinone + NADH + H(+) = a quinol + NAD(+). The catalysed reaction is a quinone + NADPH + H(+) = a quinol + NADP(+). The protein is NAD(P)H dehydrogenase (quinone) of Burkholderia vietnamiensis (strain G4 / LMG 22486) (Burkholderia cepacia (strain R1808)).